The chain runs to 390 residues: Methylthioribose-1-phosphate isomerase (390 aa).

Residues 53-55, R90, and Q207 each bind substrate; that span reads RGA. D248 acts as the Proton donor in catalysis. 258-259 serves as a coordination point for substrate; that stretch reads NK.

The protein belongs to the EIF-2B alpha/beta/delta subunits family. MtnA subfamily.

The catalysed reaction is 5-(methylsulfanyl)-alpha-D-ribose 1-phosphate = 5-(methylsulfanyl)-D-ribulose 1-phosphate. It carries out the reaction 5-deoxy-alpha-D-ribose 1-phosphate = 5-deoxy-D-ribulose 1-phosphate. It participates in amino-acid biosynthesis; L-methionine biosynthesis via salvage pathway; L-methionine from S-methyl-5-thio-alpha-D-ribose 1-phosphate: step 1/6. Catalyzes the interconversion of methylthioribose-1-phosphate (MTR-1-P) into methylthioribulose-1-phosphate (MTRu-1-P). Also catalyzes the interconversion of 5-deoxyribose 1-phosphate and 5-deoxyribulose 1-phosphate. Part of a bifunctional DHAP-shunt salvage pathway for SAM by-products. The polypeptide is Methylthioribose-1-phosphate isomerase (Rhodospirillum rubrum (strain ATCC 11170 / ATH 1.1.1 / DSM 467 / LMG 4362 / NCIMB 8255 / S1)).